Consider the following 261-residue polypeptide: Glucose 1-dehydrogenase 1 (261 aa).

Residue 11–35 (VITGSSTGLGKAMAIRFATEKAKVV) participates in NADP(+) binding. Serine 145 contacts substrate. The active-site Proton acceptor is tyrosine 158.

It belongs to the short-chain dehydrogenases/reductases (SDR) family. As to quaternary structure, homotetramer.

The enzyme catalyses D-glucose + NAD(+) = D-glucono-1,5-lactone + NADH + H(+). It catalyses the reaction D-glucose + NADP(+) = D-glucono-1,5-lactone + NADPH + H(+). Its function is as follows. May play some role in spore germination. In Priestia megaterium (Bacillus megaterium), this protein is Glucose 1-dehydrogenase 1 (gdhI).